Reading from the N-terminus, the 473-residue chain is GTPase Der (473 aa).

EngA-type G domains lie at 3–167 (FTVA…GEDR) and 203–378 (LRVA…KVWN). GTP contacts are provided by residues 9–16 (GRPNVGKS), 56–60 (DTAGL), 119–122 (NKSE), 209–216 (GRPNAGKS), 256–260 (DTAGM), and 321–324 (NKWD). Residues 379-463 (KRISTARLNR…PIRIHFRSPD (85 aa)) enclose the KH-like domain.

The protein belongs to the TRAFAC class TrmE-Era-EngA-EngB-Septin-like GTPase superfamily. EngA (Der) GTPase family. In terms of assembly, associates with the 50S ribosomal subunit.

GTPase that plays an essential role in the late steps of ribosome biogenesis. This Rhizobium johnstonii (strain DSM 114642 / LMG 32736 / 3841) (Rhizobium leguminosarum bv. viciae) protein is GTPase Der.